A 458-amino-acid chain; its full sequence is (R)-6-hydroxynicotine oxidase (458 aa).

Residues 33-204 form the FAD-binding PCMH-type domain; the sequence is RHLQRPSLIA…TEVEVQLYEL (172 aa). FAD contacts are provided by residues 67 to 73, 129 to 130, 134 to 137, Gly-144, Thr-195, Asn-413, and Asn-450; these read RSGGHNP, HP, and FCGL. His-71 bears the Pros-8alpha-FAD histidine mark.

Belongs to the oxygen-dependent FAD-linked oxidoreductase family. In terms of assembly, monomer. Requires FAD as cofactor.

The protein resides in the cytoplasm. The enzyme catalyses (R)-6-hydroxynicotine + O2 + H2O = 6-hydroxypseudooxynicotine + H2O2. It catalyses the reaction (R)-6-hydroxynicotine + O2 = 6-hydroxy-N-methylmyosmine + H2O2. It functions in the pathway alkaloid degradation; nicotine degradation; 6-hydroxypseudooxynicotine from nicotine (R-isomer route): step 2/2. With respect to regulation, inhibited by (S)-6-hydroxynicotine. Inhibited by high concentrations of phenanthroline. Involved in the degradation of D-nicotine. Catalyzes the oxidation of (R)-6-hydroxynicotine (6-hydroxy-D-nicotine) to 6-hydroxypseudooxynicotine. Oxidation of the pyrrolidine ring of (R)-6-hydroxynicotine leads to the formation of the optically inactive 6-hydroxy-N-methylmyosmine, which hydrolyzes spontaneously to 6-hydroxypseudooxynicotine. Acts with absolute stereospecificity on the D-form of 6-hydroxynicotine. Shows lower activity with (R)-6-hydroxynornicotine, and weak activity with (R)-4-(1-methylpyrrolidine-2-yl)phenol, (R)-6-chloronicotine and (R)-nicotine. The sequence is that of (R)-6-hydroxynicotine oxidase from Paenarthrobacter nicotinovorans (Arthrobacter nicotinovorans).